The following is a 25-amino-acid chain: Antifungal protein 1 (25 aa).

Residues 1 to 25 are disordered; sequence QSERFEQQMQGQDFSHDERFLSQAA. Residues 14–25 show a composition bias toward basic and acidic residues; the sequence is FSHDERFLSQAA.

The protein belongs to the 2S seed storage albumins family. In terms of tissue distribution, expressed in seed (at protein level). Not detected in pulp, stems and leaves.

In terms of biological role, has strong antifungal activity against T.harzianum, F.oxysporum and A.fumigatus with IC(50) values of 32 ug/ml, 34 ug/ml and 40 ug/ml, restectively. Lacks antifungal activity against R.solani, P.brasiliensis and C.albicans. The protein is Antifungal protein 1 of Passiflora edulis (Passion fruit).